We begin with the raw amino-acid sequence, 340 residues long: N-acetyl-gamma-glutamyl-phosphate reductase (340 aa).

Cys146 is an active-site residue.

It belongs to the NAGSA dehydrogenase family. Type 1 subfamily.

It localises to the cytoplasm. It carries out the reaction N-acetyl-L-glutamate 5-semialdehyde + phosphate + NADP(+) = N-acetyl-L-glutamyl 5-phosphate + NADPH + H(+). It functions in the pathway amino-acid biosynthesis; L-arginine biosynthesis; N(2)-acetyl-L-ornithine from L-glutamate: step 3/4. In terms of biological role, catalyzes the NADPH-dependent reduction of N-acetyl-5-glutamyl phosphate to yield N-acetyl-L-glutamate 5-semialdehyde. The sequence is that of N-acetyl-gamma-glutamyl-phosphate reductase from Streptococcus mutans serotype c (strain ATCC 700610 / UA159).